Reading from the N-terminus, the 311-residue chain is Protoheme IX farnesyltransferase (311 aa).

9 helical membrane-spanning segments follow: residues 32 to 52 (VMSLVVFTALVGLVVSPVSIN), 53 to 73 (PWYGFLAILCIAIGGGGAGVL), 104 to 124 (FVFGMVLSMLSVLMMGKFINW), 125 to 145 (FAALLLAFTIFFYIVIYTIWL), 153 to 173 (IVIGGAAGAFPPMIGCAAATG), 180 to 200 (FLLFLIIFMWTPPHFWSLSLF), 224 to 244 (KQILFYTILMTISAAGPFIID), 245 to 265 (FAGIFYAIFSTILSVIFIYFA), and 290 to 310 (FYLAAIFGILLIEFLVWYFII).

This sequence belongs to the UbiA prenyltransferase family. Protoheme IX farnesyltransferase subfamily.

It localises to the cell inner membrane. The enzyme catalyses heme b + (2E,6E)-farnesyl diphosphate + H2O = Fe(II)-heme o + diphosphate. It functions in the pathway porphyrin-containing compound metabolism; heme O biosynthesis; heme O from protoheme: step 1/1. In terms of biological role, converts heme B (protoheme IX) to heme O by substitution of the vinyl group on carbon 2 of heme B porphyrin ring with a hydroxyethyl farnesyl side group. This chain is Protoheme IX farnesyltransferase, found in Bartonella quintana (strain Toulouse) (Rochalimaea quintana).